Consider the following 102-residue polypeptide: Large ribosomal subunit protein eL21 (102 aa).

A compositionally biased stretch (basic residues) spans 1–21 (MVRRSKGFRSRTRKKLRKKPR). Residues 1 to 33 (MVRRSKGFRSRTRKKLRKKPRERGLSPLGPMTQ) are disordered.

This sequence belongs to the eukaryotic ribosomal protein eL21 family.

The polypeptide is Large ribosomal subunit protein eL21 (Methanopyrus kandleri (strain AV19 / DSM 6324 / JCM 9639 / NBRC 100938)).